The chain runs to 246 residues: Putative carboxymethylenebutenolidase (246 aa).

Catalysis depends on residues Cys-127, Asp-183, and His-215.

Belongs to the dienelactone hydrolase family.

The catalysed reaction is 2-(5-oxo-2,5-dihydrofuran-2-ylidene)acetate + H2O = 4-oxohex-2-enedioate + H(+). The polypeptide is Putative carboxymethylenebutenolidase (Synechocystis sp. (strain ATCC 27184 / PCC 6803 / Kazusa)).